We begin with the raw amino-acid sequence, 75 residues long: Small ribosomal subunit protein bS18 (75 aa).

This sequence belongs to the bacterial ribosomal protein bS18 family. In terms of assembly, part of the 30S ribosomal subunit. Forms a tight heterodimer with protein bS6.

In terms of biological role, binds as a heterodimer with protein bS6 to the central domain of the 16S rRNA, where it helps stabilize the platform of the 30S subunit. This is Small ribosomal subunit protein bS18 from Aliivibrio fischeri (strain ATCC 700601 / ES114) (Vibrio fischeri).